Consider the following 215-residue polypeptide: GTP-binding nuclear protein ran-1 (215 aa).

One can recognise a Small GTPase Ran-type domain in the interval 6-170; the sequence is GIPTFKLVLV…LWLARKLLGD (165 aa). Residue 17-24 participates in GTP binding; sequence DGGTGKTT. A switch-I region spans residues 36 to 44; sequence KKYVATLGV. Residues glycine 67, 121–124, and 149–151 contribute to the GTP site; these read NKVD and SAK. The interval 67-83 is switch-II; it reads GQEKFGGLRDGYYIQGQ.

Belongs to the small GTPase superfamily. Ran family. As to quaternary structure, found in a nuclear export complex with RanGTP, exportin and pre-miRNA.

The protein localises to the nucleus. The protein resides in the chromosome. It is found in the centromere. It localises to the kinetochore. In terms of biological role, ran GTPase system comprises ran-1, ran-2 and ran-3 and is essential in nucleocytoplasmic transport. Ran-1 is a GTP-binding protein that mediates the interaction between mitotic chromosomes and kinetochore microtubules. Plays a crucial role in nuclear envelope assembly at the end of each cell division. Required for the import of protein into the nucleus and also for RNA export. RCC1 (ran-3)/Ran (ran-1) complex (together with other proteins) acts as a component of a signal transmission pathway that detects unreplicated DNA. The sequence is that of GTP-binding nuclear protein ran-1 (ran-1) from Caenorhabditis elegans.